Here is a 489-residue protein sequence, read N- to C-terminus: MGNCADCLRGFFCPPKNTNIRISLPAVCFVWQIAMIVLFGVFIRYDAESDIRLWLQLKHTNNITSDIENDFYFRYPSFQDVHVMIFVGFGFLMTFLKRYSFGGVGFNFLIGAFGLQWALLMQGWFHALDPTTGKISIGVEGLINADFCVAASLIAYGALLGKVSPVQLMVVTLFGVTLFAVEEYIILNLLHCRDAGGSMVIHCFGGYYGLTISWILYRPKLHQSKRLNGSVYHSDVFAMIGTLFLWMFWPSFNSAITDHGSGQHRTAINTYIALASSVLTTVAISSASEKRGKLDMVHIQNATLAGGVAMGTAAEFMITPYGALIVGFCTGIISTFGYLFVSPFMEKYLKIQDTCGVHNLHAMPGMLGGFIGAIVAAAATEEVYSREGLIETFDFEGKFADRTVGTQGGFQAAGVCVAIAFAVVGGAVVGLILRLPIWGDPADDNCFDDEVYWEVPEDEEGILPVLEYNNHMTHKHQDISESNFSVEQS.

Over 1–21 (MGNCADCLRGFFCPPKNTNIR) the chain is Cytoplasmic. The chain crosses the membrane as a helical span at residues 22–42 (ISLPAVCFVWQIAMIVLFGVF). Over 43–75 (IRYDAESDIRLWLQLKHTNNITSDIENDFYFRY) the chain is Extracellular. Residue N62 is glycosylated (N-linked (GlcNAc...) asparagine). The helical transmembrane segment at 76–96 (PSFQDVHVMIFVGFGFLMTFL) threads the bilayer. Residues 97–100 (KRYS) are Cytoplasmic-facing. A helical membrane pass occupies residues 101–121 (FGGVGFNFLIGAFGLQWALLM). Over 122 to 140 (QGWFHALDPTTGKISIGVE) the chain is Extracellular. Residues 141-161 (GLINADFCVAASLIAYGALLG) form a helical membrane-spanning segment. Residues 162–169 (KVSPVQLM) are Cytoplasmic-facing. The helical transmembrane segment at 170–190 (VVTLFGVTLFAVEEYIILNLL) threads the bilayer. The Extracellular segment spans residues 191–195 (HCRDA). Residues 196 to 216 (GGSMVIHCFGGYYGLTISWIL) form a helical membrane-spanning segment. At 217 to 235 (YRPKLHQSKRLNGSVYHSD) the chain is on the cytoplasmic side. A helical membrane pass occupies residues 236–256 (VFAMIGTLFLWMFWPSFNSAI). Residues 257–266 (TDHGSGQHRT) are Extracellular-facing. A helical membrane pass occupies residues 267 to 287 (AINTYIALASSVLTTVAISSA). At 288–298 (SEKRGKLDMVH) the chain is on the cytoplasmic side. Residues 299–319 (IQNATLAGGVAMGTAAEFMIT) form a helical membrane-spanning segment. Residue P320 is a topological domain, extracellular. A helical membrane pass occupies residues 321–341 (YGALIVGFCTGIISTFGYLFV). The Cytoplasmic segment spans residues 342–359 (SPFMEKYLKIQDTCGVHN). Residues 360–380 (LHAMPGMLGGFIGAIVAAAAT) traverse the membrane as a helical segment. The Extracellular portion of the chain corresponds to 381–412 (EEVYSREGLIETFDFEGKFADRTVGTQGGFQA). A helical transmembrane segment spans residues 413–433 (AGVCVAIAFAVVGGAVVGLIL). At 434 to 489 (RLPIWGDPADDNCFDDEVYWEVPEDEEGILPVLEYNNHMTHKHQDISESNFSVEQS) the chain is on the cytoplasmic side.

This sequence belongs to the ammonium transporter (TC 2.A.49) family. Rh subfamily. As to quaternary structure, homotrimer.

It localises to the apical cell membrane. Functions as an ammonia transporter. May play a role in the elimination of ammonia in the gill. The chain is Ammonium transporter Rh type C (rhcg) from Gasterosteus aculeatus (Three-spined stickleback).